We begin with the raw amino-acid sequence, 31 residues long: Alpha-conotoxin Li1.12 (31 aa).

A propeptide spanning residues 1-15 (AGNAKMSALMALTIR) is cleaved from the precursor. 2 cysteine pairs are disulfide-bonded: cysteine 17/cysteine 23 and cysteine 18/cysteine 30. The residue at position 30 (cysteine 30) is a Cysteine amide.

Belongs to the conotoxin A superfamily. Expressed by the venom duct.

Its subcellular location is the secreted. Functionally, alpha-conotoxins act on postsynaptic membranes, they bind to the nicotinic acetylcholine receptors (nAChR) and thus inhibit them. This toxin inhibits alpha-3-beta-4, alpha-6/alpha-3-beta-4, and alpha-2-beta-4 nAChRs. In Conus lividus (Livid cone), this protein is Alpha-conotoxin Li1.12.